Here is a 601-residue protein sequence, read N- to C-terminus: Elongation factor 4 (601 aa).

In terms of domain architecture, tr-type G spans lysine 7–glutamine 189. Residues aspartate 19–threonine 24 and asparagine 136–aspartate 139 contribute to the GTP site.

The protein belongs to the TRAFAC class translation factor GTPase superfamily. Classic translation factor GTPase family. LepA subfamily.

It localises to the cell inner membrane. It catalyses the reaction GTP + H2O = GDP + phosphate + H(+). Its function is as follows. Required for accurate and efficient protein synthesis under certain stress conditions. May act as a fidelity factor of the translation reaction, by catalyzing a one-codon backward translocation of tRNAs on improperly translocated ribosomes. Back-translocation proceeds from a post-translocation (POST) complex to a pre-translocation (PRE) complex, thus giving elongation factor G a second chance to translocate the tRNAs correctly. Binds to ribosomes in a GTP-dependent manner. The polypeptide is Elongation factor 4 (Methylocella silvestris (strain DSM 15510 / CIP 108128 / LMG 27833 / NCIMB 13906 / BL2)).